The following is a 458-amino-acid chain: Light-independent protochlorophyllide reductase subunit N (458 aa).

[4Fe-4S] cluster contacts are provided by cysteine 20, cysteine 45, and cysteine 105.

This sequence belongs to the BchN/ChlN family. In terms of assembly, protochlorophyllide reductase is composed of three subunits; ChlL, ChlN and ChlB. Forms a heterotetramer of two ChlB and two ChlN subunits. It depends on [4Fe-4S] cluster as a cofactor.

It localises to the plastid. The protein resides in the chloroplast. The catalysed reaction is chlorophyllide a + oxidized 2[4Fe-4S]-[ferredoxin] + 2 ADP + 2 phosphate = protochlorophyllide a + reduced 2[4Fe-4S]-[ferredoxin] + 2 ATP + 2 H2O. It functions in the pathway porphyrin-containing compound metabolism; chlorophyll biosynthesis (light-independent). Its function is as follows. Component of the dark-operative protochlorophyllide reductase (DPOR) that uses Mg-ATP and reduced ferredoxin to reduce ring D of protochlorophyllide (Pchlide) to form chlorophyllide a (Chlide). This reaction is light-independent. The NB-protein (ChlN-ChlB) is the catalytic component of the complex. The chain is Light-independent protochlorophyllide reductase subunit N from Angiopteris evecta (Mule's foot fern).